Consider the following 443-residue polypeptide: Nuclear pore complex-interacting protein family member B15 (443 aa).

Residues 1-18 (MRLRFWLLIWLLLGFISH) form the signal peptide. Residue Asn111 is glycosylated (N-linked (GlcNAc...) asparagine). Disordered stretches follow at residues 242-262 (RMGR…NSLS) and 330-413 (SPLP…TRHC). The segment covering 252 to 262 (QQHSITDNSLS) has biased composition (polar residues). The span at 351-393 (EAEKPPKPKRWRVDEVEQSPKPKRRRADEVEQSPKPKRQREAE) shows a compositional bias: basic and acidic residues. Positions 399–412 (KPKRRRLSKLRTRH) are enriched in basic residues.

This sequence belongs to the NPIP family.

The protein resides in the secreted. The protein is Nuclear pore complex-interacting protein family member B15 (NPIPB15) of Homo sapiens (Human).